Here is a 485-residue protein sequence, read N- to C-terminus: GlcNAc-binding protein A (485 aa).

The first 23 residues, 1–23 (MKKQPKMTAIALILSGISGLAYG), serve as a signal peptide directing secretion. In terms of domain architecture, Chitin-binding type-4 spans 24–201 (HGYVSAVENG…SFYNVIDVKF (178 aa)). The Chitin-binding type-3 domain occupies 437–478 (AGTKVLASDGAIYQCKPWPYSGYCQQWTSNATQYQPGTGSHW).

It belongs to the GbpA family.

The protein localises to the secreted. Its function is as follows. Probably interacts with GlcNAc residues. May promote attachment to both epithelial cell surfaces and chitin. The polypeptide is GlcNAc-binding protein A (Vibrio cholerae serotype O1 (strain M66-2)).